Here is a 452-residue protein sequence, read N- to C-terminus: Protein CSN12 homolog (452 aa).

The region spanning 249–446 (VTFKYYEGVL…GFVVLSKSGA (198 aa)) is the PCI domain.

The protein belongs to the CSN12 family.

The polypeptide is Protein CSN12 homolog (csn-8) (Neurospora crassa (strain ATCC 24698 / 74-OR23-1A / CBS 708.71 / DSM 1257 / FGSC 987)).